Reading from the N-terminus, the 93-residue chain is Small integral membrane protein 36 (93 aa).

Residues 14 to 34 (LIILVASYVILLLVFLISCVL) traverse the membrane as a helical segment. A disordered region spans residues 73–93 (PKGPGLSLGDPAPLGKKSTMV).

It localises to the membrane. The protein is Small integral membrane protein 36 of Homo sapiens (Human).